A 38-amino-acid chain; its full sequence is Zinc-containing ferredoxin (38 aa).

A compositionally biased stretch (polar residues) spans 1-11 (GIDPNFRTSRP). The segment at 1–38 (GIDPNFRTSRPVTGDHAGHKVYAPADPPVKEKALGIHG) is disordered. The segment at 1-38 (GIDPNFRTSRPVTGDHAGHKVYAPADPPVKEKALGIHG) is N-terminal extension. The Zn(2+) site is built by His16 and His19. Residues 28–38 (PVKEKALGIHG) show a composition bias toward basic and acidic residues. Position 30 is an N6-methyllysine (Lys30). His37 contacts Zn(2+).

The cofactor is [3Fe-4S] cluster. [4Fe-4S] cluster is required as a cofactor. It depends on Zn(2+) as a cofactor.

In terms of biological role, ferredoxins are iron-sulfur proteins that transfer electrons in a wide variety of metabolic reactions. In Metallosphaera prunae, this protein is Zinc-containing ferredoxin (zfx).